The chain runs to 229 residues: Large ribosomal subunit protein uL1 (229 aa).

This sequence belongs to the universal ribosomal protein uL1 family. As to quaternary structure, part of the 50S ribosomal subunit.

Functionally, binds directly to 23S rRNA. The L1 stalk is quite mobile in the ribosome, and is involved in E site tRNA release. Protein L1 is also a translational repressor protein, it controls the translation of the L11 operon by binding to its mRNA. The sequence is that of Large ribosomal subunit protein uL1 from Lactococcus lactis subsp. lactis (strain IL1403) (Streptococcus lactis).